The primary structure comprises 634 residues: Chaperone protein DnaK 2 (634 aa).

A Phosphothreonine; by autocatalysis modification is found at T197. Low complexity predominate over residues 600-620 (ASAEASANAQAGPSSSSSSSS). The disordered stretch occupies residues 600–634 (ASAEASANAQAGPSSSSSSSSGDDDVIDAEFSESK). The span at 621-634 (GDDDVIDAEFSESK) shows a compositional bias: acidic residues.

This sequence belongs to the heat shock protein 70 family.

In terms of biological role, acts as a chaperone. The protein is Chaperone protein DnaK 2 of Synechococcus sp. (strain ATCC 27144 / PCC 6301 / SAUG 1402/1) (Anacystis nidulans).